Reading from the N-terminus, the 239-residue chain is NAD-dependent protein deacylase (239 aa).

The Deacetylase sirtuin-type domain maps to 1–234 (MENLNIVTLT…KKVYDYLREK (234 aa)). Residues 11–30 (GAGI…DGLW) and 89–92 (QNVD) contribute to the NAD(+) site. The active-site Proton acceptor is the histidine 107. Cysteine 115, cysteine 118, cysteine 136, and cysteine 139 together coordinate Zn(2+). NAD(+)-binding positions include 176 to 178 (GTS), 202 to 204 (NPE), and alanine 220.

Belongs to the sirtuin family. Class III subfamily. Requires Zn(2+) as cofactor.

The protein localises to the cytoplasm. It carries out the reaction N(6)-acetyl-L-lysyl-[protein] + NAD(+) + H2O = 2''-O-acetyl-ADP-D-ribose + nicotinamide + L-lysyl-[protein]. Its function is as follows. NAD-dependent protein deacetylase which modulates the activities of several proteins which are inactive in their acetylated form. This is NAD-dependent protein deacylase from Aquifex aeolicus (strain VF5).